Reading from the N-terminus, the 1114-residue chain is Zinc finger E-box-binding homeobox 1 (1114 aa).

Disordered regions lie at residues 1–105 (MADG…EVGC) and 142–163 (APEE…NGTP). Residues 15 to 30 (PRRNNVTNYNNVIEAN) show a composition bias toward low complexity. A compositionally biased stretch (polar residues) spans 149-160 (QGTPEASGQDEN). 3 C2H2-type zinc fingers span residues 170–193 (LTCP…KYRH), 200–222 (FSCS…MTSH), and 240–262 (FKCT…LRIH). Residues 268–292 (YECPNCKKRFSHSGSYSSHISSKKC) form a C2H2-type 4; atypical zinc finger. 4 disordered regions span residues 304 to 326 (SGLK…PARP), 491 to 529 (NLKK…TNDS), 553 to 588 (KNPP…GQPP), and 636 to 716 (QISV…SRNS). The segment covering 309–326 (SQCSSPSLSASPGSPARP) has biased composition (low complexity). Over residues 504-523 (KNEKLPEDLTVKSEKDKNFE) the composition is skewed to basic and acidic residues. 2 stretches are compositionally biased toward polar residues: residues 573–584 (APSETGENNLSP) and 636–681 (QISV…QNPA). Positions 581 to 640 (NLSPGQPPLKNLLSLLKAYYALNAQPSAEELSKIADSVNLPLDVVKKWFEKMQAGQISVQ) form a DNA-binding region, homeobox; atypical. Residues 682–716 (NTSKSQTSSGGSTQNGSRSSTPSPSPLNLSSSRNS) show a composition bias toward low complexity. The CTBP-binding motif signature appears at 767 to 771 (PLNLT). Composition is skewed to polar residues over residues 852–866 (AVQE…ANGS) and 874–890 (SSEG…SDST). The tract at residues 852-898 (AVQETPPKQTQANGSQDERQDTSSEGVSNVEDQNDSDSTPPKKKMRK) is disordered. 2 consecutive C2H2-type zinc fingers follow at residues 904–926 (YACD…KYEH) and 932–954 (HECG…MRLH). The segment at 960-981 (YQCDKCGKRFSHSGSYSQHMNH) adopts a C2H2-type 7; atypical zinc-finger fold. Positions 989–1114 (EAEERDSTEQ…QVSEEKTNKA (126 aa)) are disordered. Acidic residues predominate over residues 1031–1047 (EEEEDSEKEEEEEEEKD). Over residues 1048-1062 (VEGLQEEKECRKLQD) the composition is skewed to basic and acidic residues. The segment covering 1063–1078 (VEEEEEVEEEEEEEEG) has biased composition (acidic residues). Over residues 1079 to 1089 (KTEGNKNDDVV) the composition is skewed to basic and acidic residues.

Belongs to the delta-EF1/ZFH-1 C2H2-type zinc-finger family. As to expression, expression is developmentally regulated with high expression in mesoderm, nervous system and lens.

Its subcellular location is the nucleus. Acts as a transcriptional repressor. Positively regulates neuronal differentiation. Represses transcription by binding to the E box-containing promoter. Binds to delta 1-crystallin enhancer core and represses lens-specific transcription. It also binds many other non-lens specific DNA sequences. The chain is Zinc finger E-box-binding homeobox 1 (ZEB1) from Gallus gallus (Chicken).